We begin with the raw amino-acid sequence, 582 residues long: Insulin-like growth factor 2 mRNA-binding protein 3 (582 aa).

2 consecutive RRM domains span residues 2 to 75 (NKLY…HSVP) and 81 to 156 (CKLQ…YIPD). Residues 164–190 (PAVGGRRGFNPRGPPRQGSPSLGARPK) are disordered. The residue at position 182 (Ser-182) is a Phosphoserine. KH domains are found at residues 194-259 (DVPL…CRNI), 275-342 (EIPL…EEEI), 408-473 (SETV…QGRI), and 490-556 (KLEA…QRKI). The tract at residues 562-582 (QVRRQQQPKPSAAGPPVARRK) is disordered.

This sequence belongs to the RRM IMP/VICKZ family. Homodimer and multimer.

The protein localises to the cytoplasm. It localises to the nucleus. The protein resides in the P-body. Its subcellular location is the stress granule. In terms of biological role, RNA-binding factor that may recruit target transcripts to cytoplasmic protein-RNA complexes (mRNPs). This transcript 'caging' into mRNPs allows mRNA transport and transient storage. It also modulates the rate and location at which target transcripts encounter the translational apparatus and shields them from endonuclease attacks or microRNA-mediated degradation. Preferentially binds to N6-methyladenosine (m6A)-containing mRNAs and increases their stability. Involved in neuronal crest migration. The polypeptide is Insulin-like growth factor 2 mRNA-binding protein 3 (igf2bp3) (Danio rerio (Zebrafish)).